We begin with the raw amino-acid sequence, 141 residues long: Hemoglobin subunit alpha (141 aa).

The 141-residue stretch at 1 to 141 (VLSANDKANV…VSTVLTSKYR (141 aa)) folds into the Globin domain. Residue Ser-3 is modified to Phosphoserine. N6-succinyllysine occurs at positions 7 and 11. Lys-16 is modified (N6-acetyllysine; alternate). The residue at position 16 (Lys-16) is an N6-succinyllysine; alternate. Tyr-24 is subject to Phosphotyrosine. A Phosphoserine modification is found at Ser-35. An N6-succinyllysine modification is found at Lys-40. The residue at position 49 (Ser-49) is a Phosphoserine. Residue His-58 participates in O2 binding. His-87 is a heme b binding site. The residue at position 102 (Ser-102) is a Phosphoserine. The residue at position 108 (Thr-108) is a Phosphothreonine. Phosphoserine occurs at positions 124 and 131. 2 positions are modified to phosphothreonine: Thr-134 and Thr-137. Residue Ser-138 is modified to Phosphoserine.

This sequence belongs to the globin family. Heterotetramer of two alpha chains and two beta chains. Red blood cells.

Functionally, involved in oxygen transport from the lung to the various peripheral tissues. Hemopressin acts as an antagonist peptide of the cannabinoid receptor CNR1. Hemopressin-binding efficiently blocks cannabinoid receptor CNR1 and subsequent signaling. The protein is Hemoglobin subunit alpha (HBA) of Suncus murinus (Asian house shrew).